Consider the following 78-residue polypeptide: D-alanyl carrier protein (78 aa).

The Carrier domain occupies 1–78 (MEFREQVLDL…KIVEALEELR (78 aa)). Serine 36 carries the post-translational modification O-(pantetheine 4'-phosphoryl)serine.

It belongs to the DltC family. Post-translationally, 4'-phosphopantetheine is transferred from CoA to a specific serine of apo-DCP.

Its subcellular location is the cytoplasm. It functions in the pathway cell wall biogenesis; lipoteichoic acid biosynthesis. Functionally, carrier protein involved in the D-alanylation of lipoteichoic acid (LTA). The loading of thioester-linked D-alanine onto DltC is catalyzed by D-alanine--D-alanyl carrier protein ligase DltA. The DltC-carried D-alanyl group is further transferred to cell membrane phosphatidylglycerol (PG) by forming an ester bond, probably catalyzed by DltD. D-alanylation of LTA plays an important role in modulating the properties of the cell wall in Gram-positive bacteria, influencing the net charge of the cell wall. The polypeptide is D-alanyl carrier protein (Staphylococcus epidermidis (strain ATCC 35984 / DSM 28319 / BCRC 17069 / CCUG 31568 / BM 3577 / RP62A)).